Consider the following 282-residue polypeptide: 4-hydroxy-tetrahydrodipicolinate reductase (282 aa).

NAD(+) contacts are provided by residues 14–19 and 115–117; these read GAMGRM and GTT. Residue His-171 is the Proton donor/acceptor of the active site. His-172 contributes to the (S)-2,3,4,5-tetrahydrodipicolinate binding site. Lys-175 (proton donor) is an active-site residue. 181-182 contributes to the (S)-2,3,4,5-tetrahydrodipicolinate binding site; the sequence is GT.

This sequence belongs to the DapB family.

It localises to the cytoplasm. The catalysed reaction is (S)-2,3,4,5-tetrahydrodipicolinate + NAD(+) + H2O = (2S,4S)-4-hydroxy-2,3,4,5-tetrahydrodipicolinate + NADH + H(+). It carries out the reaction (S)-2,3,4,5-tetrahydrodipicolinate + NADP(+) + H2O = (2S,4S)-4-hydroxy-2,3,4,5-tetrahydrodipicolinate + NADPH + H(+). The protein operates within amino-acid biosynthesis; L-lysine biosynthesis via DAP pathway; (S)-tetrahydrodipicolinate from L-aspartate: step 4/4. Catalyzes the conversion of 4-hydroxy-tetrahydrodipicolinate (HTPA) to tetrahydrodipicolinate. In Prochlorococcus marinus (strain NATL2A), this protein is 4-hydroxy-tetrahydrodipicolinate reductase.